The primary structure comprises 251 residues: Ubiquinone/menaquinone biosynthesis C-methyltransferase UbiE (251 aa).

S-adenosyl-L-methionine is bound by residues T74, D95, 123–124 (NA), and S140.

Belongs to the class I-like SAM-binding methyltransferase superfamily. MenG/UbiE family.

The catalysed reaction is a 2-demethylmenaquinol + S-adenosyl-L-methionine = a menaquinol + S-adenosyl-L-homocysteine + H(+). The enzyme catalyses a 2-methoxy-6-(all-trans-polyprenyl)benzene-1,4-diol + S-adenosyl-L-methionine = a 5-methoxy-2-methyl-3-(all-trans-polyprenyl)benzene-1,4-diol + S-adenosyl-L-homocysteine + H(+). It participates in quinol/quinone metabolism; menaquinone biosynthesis; menaquinol from 1,4-dihydroxy-2-naphthoate: step 2/2. The protein operates within cofactor biosynthesis; ubiquinone biosynthesis. In terms of biological role, methyltransferase required for the conversion of demethylmenaquinol (DMKH2) to menaquinol (MKH2) and the conversion of 2-polyprenyl-6-methoxy-1,4-benzoquinol (DDMQH2) to 2-polyprenyl-3-methyl-6-methoxy-1,4-benzoquinol (DMQH2). The sequence is that of Ubiquinone/menaquinone biosynthesis C-methyltransferase UbiE from Pectobacterium atrosepticum (strain SCRI 1043 / ATCC BAA-672) (Erwinia carotovora subsp. atroseptica).